A 393-amino-acid polypeptide reads, in one-letter code: Translation initiation factor eIF2B subunit beta (393 aa).

Positions 105–125 are disordered; the sequence is VSSSNSSSPSQKRDIPSNEKL. Phosphoserine occurs at positions 106, 108, and 112.

This sequence belongs to the eIF-2B alpha/beta/delta subunits family. Component of the translation initiation factor 2B (eIF2B) complex which is a heterodecamer of two sets of five different subunits: alpha, beta, gamma, delta and epsilon. Subunits alpha, beta and delta comprise a regulatory subcomplex and subunits epsilon and gamma comprise a catalytic subcomplex. Within the complex, the hexameric regulatory complex resides at the center, with the two heterodimeric catalytic subcomplexes bound on opposite sides.

The protein resides in the cytoplasm. Its subcellular location is the cytosol. Functionally, acts as a component of the translation initiation factor 2B (eIF2B) complex, which catalyzes the exchange of GDP for GTP on the eukaryotic initiation factor 2 (eIF2) complex gamma subunit. Its guanine nucleotide exchange factor activity is repressed when bound to eIF2 complex phosphorylated on the alpha subunit, thereby limiting the amount of methionyl-initiator methionine tRNA available to the ribosome and consequently global translation is repressed. The protein is Translation initiation factor eIF2B subunit beta (tif222) of Schizosaccharomyces pombe (strain 972 / ATCC 24843) (Fission yeast).